Reading from the N-terminus, the 487-residue chain is ATP synthase subunit beta 1 (487 aa).

162 to 169 (GGAGVGKT) is a binding site for ATP.

It belongs to the ATPase alpha/beta chains family. As to quaternary structure, F-type ATPases have 2 components, CF(1) - the catalytic core - and CF(0) - the membrane proton channel. CF(1) has five subunits: alpha(3), beta(3), gamma(1), delta(1), epsilon(1). CF(0) has three main subunits: a(1), b(2) and c(9-12). The alpha and beta chains form an alternating ring which encloses part of the gamma chain. CF(1) is attached to CF(0) by a central stalk formed by the gamma and epsilon chains, while a peripheral stalk is formed by the delta and b chains.

Its subcellular location is the cell inner membrane. It carries out the reaction ATP + H2O + 4 H(+)(in) = ADP + phosphate + 5 H(+)(out). Its function is as follows. Produces ATP from ADP in the presence of a proton gradient across the membrane. The catalytic sites are hosted primarily by the beta subunits. This chain is ATP synthase subunit beta 1, found in Gluconobacter oxydans (strain 621H) (Gluconobacter suboxydans).